We begin with the raw amino-acid sequence, 401 residues long: Formate-dependent phosphoribosylglycinamide formyltransferase (401 aa).

N(1)-(5-phospho-beta-D-ribosyl)glycinamide contacts are provided by residues 22–23 (EL) and Glu-82. ATP-binding positions include Arg-115, Lys-157, 162–167 (SSGKGQ), 197–200 (EGFI), and Glu-205. The ATP-grasp domain maps to 120–315 (RLAAETLGLP…EFELHARAIL (196 aa)). 2 residues coordinate Mg(2+): Glu-274 and Glu-286. Residues Asp-293, Lys-362, and 369–370 (RR) contribute to the N(1)-(5-phospho-beta-D-ribosyl)glycinamide site.

Belongs to the PurK/PurT family. Homodimer.

The enzyme catalyses N(1)-(5-phospho-beta-D-ribosyl)glycinamide + formate + ATP = N(2)-formyl-N(1)-(5-phospho-beta-D-ribosyl)glycinamide + ADP + phosphate + H(+). The protein operates within purine metabolism; IMP biosynthesis via de novo pathway; N(2)-formyl-N(1)-(5-phospho-D-ribosyl)glycinamide from N(1)-(5-phospho-D-ribosyl)glycinamide (formate route): step 1/1. Involved in the de novo purine biosynthesis. Catalyzes the transfer of formate to 5-phospho-ribosyl-glycinamide (GAR), producing 5-phospho-ribosyl-N-formylglycinamide (FGAR). Formate is provided by PurU via hydrolysis of 10-formyl-tetrahydrofolate. In Cupriavidus pinatubonensis (strain JMP 134 / LMG 1197) (Cupriavidus necator (strain JMP 134)), this protein is Formate-dependent phosphoribosylglycinamide formyltransferase.